The sequence spans 136 residues: Large ribosomal subunit protein uL16 (136 aa).

Belongs to the universal ribosomal protein uL16 family. In terms of assembly, part of the 50S ribosomal subunit.

Functionally, binds 23S rRNA and is also seen to make contacts with the A and possibly P site tRNAs. The sequence is that of Large ribosomal subunit protein uL16 from Rickettsia typhi (strain ATCC VR-144 / Wilmington).